Reading from the N-terminus, the 399-residue chain is Phosphoprotein (399 aa).

Polar residues-rich tracts occupy residues 30–46 (ATSQ…SSRT) and 82–112 (GRQN…LPSP). The tract at residues 30-112 (ATSQSSLNKP…MGSDTQLPSP (83 aa)) is disordered. The multimerization stretch occupies residues 224 to 287 (NYASEILDAI…ITTMKIMDPG (64 aa)). The stretch at 226-253 (ASEILDAIKALEVRLDRIEGKVDKIMLT) forms a coiled coil.

It belongs to the rubulavirus/avulavirus P protein family. In terms of assembly, homotetramer. Interacts (via multimerization domain) with polymerase L; this interaction forms the polymerase L-P complex. Interacts (via N-terminus) with N0 (via Ncore); this interaction allows P to chaperon N0 to avoid N polymerization before encapsidation. Interacts (via C-terminus) with N-RNA template; this interaction positions the polymerase on the template for both transcription and replication.

Essential cofactor of the RNA polymerase L that plays a central role in the transcription and replication by forming the polymerase complex with RNA polymerase L and recruiting L to the genomic N-RNA template for RNA synthesis. Also plays a central role in the encapsidation of nascent RNA chains by forming the encapsidation complex with the nucleocapsid protein N (N-P complex). Acts as a chaperone for newly synthesized free N protein, so-called N0, allowing encapsidation of nascent RNA chains during replication. The nucleoprotein protein N prevents excessive phosphorylation of P, which leads to down-regulation of viral transcription/ replication. Participates, together with N, in the formation of viral factories (viroplasms), which are large inclusions in the host cytoplasm where replication takes place. This Human parainfluenza 4a virus (strain Toshiba) (HPIV-4a) protein is Phosphoprotein (P/V).